The chain runs to 515 residues: uncharacterized protein (515 aa).

The segment at 146-171 (SSEVDRNSETEGTREENSNTSDWDEQ) is disordered. Residues 148–162 (EVDRNSETEGTREEN) are compositionally biased toward basic and acidic residues.

The protein localises to the cytoplasm. It localises to the nucleus. This is an uncharacterized protein from Schizosaccharomyces pombe (strain 972 / ATCC 24843) (Fission yeast).